The sequence spans 381 residues: Putative heat shock protein HSP 90-beta 2 (381 aa).

Positions 46, 88, and 107 each coordinate ATP. Residues 145–174 (KEISDGKAEEEKGEKEEENKDDEEKPKIED) are compositionally biased toward basic and acidic residues. Residues 145 to 192 (KEISDGKAEEEKGEKEEENKDDEEKPKIEDVGSDEEDDSGKDKKKKTK) are disordered. Ser-177 bears the Phosphoserine mark. Residues 315 to 347 (ELPEDGEEKKRMEERKAKFENLCKFMKETLDKK) are a coiled coil.

Belongs to the heat shock protein 90 family. Homodimer.

The protein localises to the cytoplasm. Putative molecular chaperone that may promote the maturation, structural maintenance and proper regulation of specific target proteins. The chain is Putative heat shock protein HSP 90-beta 2 (HSP90AB2P) from Homo sapiens (Human).